We begin with the raw amino-acid sequence, 461 residues long: Flavin-containing monooxygenase FMO GS-OX4 (461 aa).

17–22 (GAGAAG) is an FAD binding site. 211-216 (GNFASG) serves as a coordination point for NADP(+).

This sequence belongs to the FMO family.

The enzyme catalyses a (Z)-omega-(methylsulfanyl)-N-sulfo-alkylhydroximate S-glucoside + NADPH + O2 + H(+) = a (Z)-omega-(methylsulfinyl)-alkyl-glucosinolate + NADP(+) + H2O. Catalyzes the conversion of methylthioalkyl glucosinolates of any chain length into methylsulfinylalkyl glucosinolates. In Arabidopsis thaliana (Mouse-ear cress), this protein is Flavin-containing monooxygenase FMO GS-OX4 (FMOGS-OX4).